The chain runs to 271 residues: MEDYLKQFVEETSFYNRLVLGTFMPESWWGPLPHMLQGWLRNYIGGVLLYFISGFLWCFYIYHLKRNVYIPKDAIPSNKAMLLQISVAMKAMPWYCALPSLSEYMIENGWTKCFARISDVGWLSYVIYAAIYLVIVEFGIYWMHMELHDIKPLYKYLHATHHIYNKQNTLSPFAGLAFHPLDGILQAVPHVVALLLVPMHFSTHIALIFLEALWTANIHDCIHGKVFPVMGAGYHTIHHRTYRHNYGHYTIWMDWMFGTLRDPVEEDAKKM.

The next 2 helical transmembrane spans lie at 44-64 and 120-140; these read IGGVLLYFISGFLWCFYIYHL and VGWLSYVIYAAIYLVIVEFGI. Positions 130–259 constitute a Fatty acid hydroxylase domain; sequence AIYLVIVEFG…TIWMDWMFGT (130 aa). A Histidine box-1 motif is present at residues 144-148; it reads HMELH. A Histidine box-2 motif is present at residues 158–162; that stretch reads HATHH. Residues 190-210 form a helical membrane-spanning segment; sequence HVVALLLVPMHFSTHIALIFL. Residues 235–239 carry the Histidine box-3 motif; sequence HTIHH.

It belongs to the sterol desaturase family. Requires Fe cation as cofactor.

The protein localises to the endoplasmic reticulum membrane. It catalyses the reaction a Delta(7)-sterol + 2 Fe(II)-[cytochrome b5] + O2 + 2 H(+) = a Delta(5),Delta(7)-sterol + 2 Fe(III)-[cytochrome b5] + 2 H2O. Functionally, involved in the biosynthesis of sitosterol and campesterol. The protein is Delta(7)-sterol-C5(6)-desaturase of Nicotiana tabacum (Common tobacco).